The sequence spans 344 residues: Follistatin (344 aa).

Residues 1–29 (MARPRHQPGGLCLLLLLLCQFMEDRSAQA) form the signal peptide. The 74-residue stretch at 30-103 (GNCWLRQAKN…TCENVDCGPG (74 aa)) folds into the TB domain. Cystine bridges form between Cys32-Cys55, Cys42-Cys88, Cys56-Cys91, Cys95-Cys106, Cys100-Cys116, Cys118-Cys150, Cys122-Cys143, Cys132-Cys164, Cys168-Cys179, Cys173-Cys189, Cys192-Cys225, Cys196-Cys218, Cys207-Cys239, Cys245-Cys256, Cys250-Cys267, Cys270-Cys302, Cys274-Cys295, and Cys284-Cys316. One can recognise a Follistatin-like 1 domain in the interval 94–117 (TCENVDCGPGKKCRMNKKNKPRCV). The Kazal-like 1 domain occupies 112 to 166 (NKPRCVCAPDCSNITWKGLVCGLDGKTYRNECALLKARCKEQPELQVQYQGKCKK). Residue Asn124 is glycosylated (N-linked (GlcNAc...) asparagine). The region spanning 167 to 190 (TCRDVFCPGSSTCVVDQTNNAYCV) is the Follistatin-like 2 domain. One can recognise a Kazal-like 2 domain in the interval 186-241 (NAYCVTCNRICPEPTSSEQYLCGNDGVTYPSACHLRKATCLLGRSIGLAYEGKCIK). One can recognise a Follistatin-like 3 domain in the interval 244-268 (SCDDIQCTGGKKCLWDFKVGRGRCS). The 58-residue stretch at 261-318 (KVGRGRCSLCGELCPESKSEEPVCASDNATYASECAMKEAACSSGVLLEVKHSGSCNS) folds into the Kazal-like 3 domain. An N-linked (GlcNAc...) asparagine glycan is attached at Asn288. Residues 316-344 (CNSISEDTEDEEEDEDQDYSFPISSILEW) form a disordered region. A compositionally biased stretch (acidic residues) spans 321 to 333 (EDTEDEEEDEDQD).

Monomer.

The protein localises to the secreted. Functionally, binds directly to activin and functions as an activin antagonist. Specific inhibitor of the biosynthesis and secretion of pituitary follicle stimulating hormone (FSH). The chain is Follistatin from Bubalus bubalis (Domestic water buffalo).